We begin with the raw amino-acid sequence, 215 residues long: tRNA (guanine-N(7)-)-methyltransferase (215 aa).

S-adenosyl-L-methionine contacts are provided by Glu44, Glu69, Asp96, and Asp118. The active site involves Asp118. Substrate contacts are provided by residues Lys122, Asp154, and Thr192–Glu195.

It belongs to the class I-like SAM-binding methyltransferase superfamily. TrmB family.

The catalysed reaction is guanosine(46) in tRNA + S-adenosyl-L-methionine = N(7)-methylguanosine(46) in tRNA + S-adenosyl-L-homocysteine. Its pathway is tRNA modification; N(7)-methylguanine-tRNA biosynthesis. Catalyzes the formation of N(7)-methylguanine at position 46 (m7G46) in tRNA. The chain is tRNA (guanine-N(7)-)-methyltransferase from Levilactobacillus brevis (strain ATCC 367 / BCRC 12310 / CIP 105137 / JCM 1170 / LMG 11437 / NCIMB 947 / NCTC 947) (Lactobacillus brevis).